The chain runs to 454 residues: tRNA modification GTPase MnmE (454 aa).

The (6S)-5-formyl-5,6,7,8-tetrahydrofolate site is built by Arg-26, Glu-84, and Lys-123. In terms of domain architecture, TrmE-type G spans 219–378 (GLQVVIAGKP…LVDAITAHAG (160 aa)). Asn-229 is a binding site for K(+). Residues 229–234 (NAGKSS), 248–254 (TDIAGTT), and 273–276 (DTAG) each bind GTP. Ser-233 contacts Mg(2+). 3 residues coordinate K(+): Thr-248, Ile-250, and Thr-253. Thr-254 provides a ligand contact to Mg(2+). A (6S)-5-formyl-5,6,7,8-tetrahydrofolate-binding site is contributed by Lys-454.

It belongs to the TRAFAC class TrmE-Era-EngA-EngB-Septin-like GTPase superfamily. TrmE GTPase family. As to quaternary structure, homodimer. Heterotetramer of two MnmE and two MnmG subunits. K(+) is required as a cofactor.

Its subcellular location is the cytoplasm. In terms of biological role, exhibits a very high intrinsic GTPase hydrolysis rate. Involved in the addition of a carboxymethylaminomethyl (cmnm) group at the wobble position (U34) of certain tRNAs, forming tRNA-cmnm(5)s(2)U34. The protein is tRNA modification GTPase MnmE of Acinetobacter baumannii (strain AYE).